The sequence spans 256 residues: MISAQNLVYSLQGRRLTDNVSLTFPGGEIVAILGPNGAGKSTLLRQLTGYLQPDSGECRLFNKPLNEWSITELAKHRAVMRQNSHMAFPFSVQEVIQMGRHPHRTGNQDNETAQIMALCDCQALANRDYRQLSGGEQQRVQLARLLVQLWEPTPSPKWLFLDEPTSALDIHHQQHLFRLLRQLVHERQFNVCCVLHDLNLAARYADRVVLMQKGKVIANGKPQDVLTQQALTMLYGADITVLKDPANHSPLIVLDH.

In terms of domain architecture, ABC transporter spans isoleucine 2 to aspartate 238. Glycine 34 to serine 41 contacts ATP.

Belongs to the ABC transporter superfamily. Heme (hemin) importer (TC 3.A.1.14.5) family. In terms of assembly, the complex is composed of two ATP-binding proteins (HmuV), two transmembrane proteins (HmuU) and a solute-binding protein (HmuT).

Its subcellular location is the cell inner membrane. Its function is as follows. Part of the ABC transporter complex HmuTUV involved in hemin import. Responsible for energy coupling to the transport system. The chain is Hemin import ATP-binding protein HmuV from Escherichia coli O6:K15:H31 (strain 536 / UPEC).